The following is a 121-amino-acid chain: Large ribosomal subunit protein uL18 (121 aa).

This sequence belongs to the universal ribosomal protein uL18 family. Part of the 50S ribosomal subunit; part of the 5S rRNA/L5/L18/L25 subcomplex. Contacts the 5S and 23S rRNAs.

Functionally, this is one of the proteins that bind and probably mediate the attachment of the 5S RNA into the large ribosomal subunit, where it forms part of the central protuberance. This is Large ribosomal subunit protein uL18 from Polaromonas sp. (strain JS666 / ATCC BAA-500).